We begin with the raw amino-acid sequence, 689 residues long: Small ribosomal subunit protein mS39 (689 aa).

The transit peptide at 1–37 directs the protein to the mitochondrion; it reads MAGVSAVRWLGLRSRLGQPLTGRRAGLCKQARSCRFY. Residue Lys126 is modified to N6-acetyllysine. PPR repeat units lie at residues 149-183, 184-219, 255-289, 290-330, 331-367, 368-404, 412-446, 454-488, 489-523, and 572-606; these read IKDISEAALKERIELRKVKASVDMFDQLLQAGTTV, SLETTNSLLDLLCYFGDQEPSTDYHFQQTEQSEALE, NAHSYCTMIRGMVKHRAYEQALNLYTELLNNRLHA, DVYT…KVKP, NLQTFNTILKCLRRFHVFARSPALRILREMKAIGIEP, SLATYHHIIHVFDQPGDPLKRSSFIIYDIMNELMGKR, DDKFFQSAMSICSSLRDLELAYQVHGLLNTGDNWK, RNFYYSKFFDLICLMEQIDVTLKWYEDLIPSVYFP, HSQTLIHLLQALDVANRLEMIPKIWKDSKEYGHTF, and PATSLYCIAILFLRAGRTQEAWNMLELFRKHNKIP. The tract at residues 665–689 is disordered; that stretch reads NLTALTSDSDTDSSSDSDSDTSEGK. Residues 673-689 are compositionally biased toward acidic residues; the sequence is SDTDSSSDSDSDTSEGK.

This sequence belongs to the mitochondrion-specific ribosomal protein mS39 family. As to quaternary structure, component of the mitochondrial ribosome small subunit (28S) which comprises a 12S rRNA and about 30 distinct proteins. Associated with the 12S mitochondrial rRNA (12S mt-rRNA).

The protein resides in the mitochondrion. Its function is as follows. Mitochondrial RNA-binding protein that has a role in mitochondrial translation. The chain is Small ribosomal subunit protein mS39 (PTCD3) from Pongo abelii (Sumatran orangutan).